A 43-amino-acid chain; its full sequence is Protein PsbN (43 aa).

The helical transmembrane segment at 5–27 (TLVTIFISGSLVSFTGYALYTAF) threads the bilayer.

This sequence belongs to the PsbN family.

The protein resides in the plastid. It is found in the chloroplast thylakoid membrane. In terms of biological role, may play a role in photosystem I and II biogenesis. This is Protein PsbN from Piper cenocladum (Ant piper).